The primary structure comprises 156 residues: MVHAQFDPTSREELAIAAVEAKIAKDLSWQQIADAAGYSPAFVTAAVLGQHPLPPRAADTVAGLLGLGDDAALLLQTIPTRGSIPAGVPTDPTIYRFYEMLQVYGTTLKALIHEQFGDGIISAINFKLDVRKVPDPDGGYRAVVTLDGKYLPTVPF.

Active-site residues include arginine 96, glutamate 99, and serine 122.

This sequence belongs to the cyanase family.

The catalysed reaction is cyanate + hydrogencarbonate + 3 H(+) = NH4(+) + 2 CO2. Catalyzes the reaction of cyanate with bicarbonate to produce ammonia and carbon dioxide. The sequence is that of Cyanate hydratase from Mycobacteroides abscessus (strain ATCC 19977 / DSM 44196 / CCUG 20993 / CIP 104536 / JCM 13569 / NCTC 13031 / TMC 1543 / L948) (Mycobacterium abscessus).